The sequence spans 472 residues: Poly(A) polymerase catalytic subunit (472 aa).

Catalysis depends on residues Asp-191 and Asp-193.

It belongs to the poxviridae poly(A) polymerase catalytic subunit family. In terms of assembly, heterodimer of a large (catalytic) subunit and a small (regulatory) subunit.

The catalysed reaction is RNA(n) + ATP = RNA(n)-3'-adenine ribonucleotide + diphosphate. Its function is as follows. Polymerase that creates the 3'-poly(A) tail of mRNA's. This is Poly(A) polymerase catalytic subunit (PAPL) from Capra hircus (Goat).